Reading from the N-terminus, the 533-residue chain is Beta-1,4 N-acetylgalactosaminyltransferase 1 (533 aa).

Residues 1–7 are Cytoplasmic-facing; the sequence is MWLGRRA. A helical; Signal-anchor for type II membrane protein transmembrane segment spans residues 8 to 25; that stretch reads LCALVLLLACASLGLLYA. At 26–533 the chain is on the lumenal side; sequence STRDAPGLRL…KHRLQCMTSQ (508 aa). 3 N-linked (GlcNAc...) asparagine glycosylation sites follow: Asn79, Asn179, and Asn274. The cysteines at positions 429 and 476 are disulfide-linked.

Belongs to the glycosyltransferase 2 family. In terms of assembly, homodimer; disulfide-linked.

It is found in the golgi apparatus membrane. The enzyme catalyses a ganglioside GM3 (d18:1(4E)) + UDP-N-acetyl-alpha-D-galactosamine = a ganglioside GM2 (d18:1(4E)) + UDP + H(+). It carries out the reaction a ganglioside GM3 + UDP-N-acetyl-alpha-D-galactosamine = a ganglioside GM2 + UDP + H(+). It catalyses the reaction a ganglioside GD3 + UDP-N-acetyl-alpha-D-galactosamine = a ganglioside GD2 + UDP + H(+). The catalysed reaction is a ganglioside GD3 (d18:1(4E)) + UDP-N-acetyl-alpha-D-galactosamine = a ganglioside GD2 (d18:1(4E)) + UDP + H(+). The enzyme catalyses a beta-D-Gal-(1-&gt;4)-beta-D-Glc-(1&lt;-&gt;1)-Cer(d18:1(4E)) + UDP-N-acetyl-alpha-D-galactosamine = a ganglioside GA2 (d18:1(4E)) + UDP + H(+). It carries out the reaction a ganglioside GD1a + UDP-N-acetyl-alpha-D-galactosamine = a ganglioside GalNAc-GD1a + UDP + H(+). It catalyses the reaction a ganglioside GT3 (d18:1(4E)) + UDP-N-acetyl-alpha-D-galactosamine = a ganglioside GT2 (d18:1(4E)) + UDP + H(+). The catalysed reaction is a beta-D-galactosyl-(1-&gt;4)-beta-D-glucosyl-(1&lt;-&gt;1)-ceramide + UDP-N-acetyl-alpha-D-galactosamine = a ganglioside GA2 + UDP + H(+). The enzyme catalyses a neolactoside IV(3)-alpha-NeuGc-nLc4Cer + UDP-N-acetyl-alpha-D-galactosamine = a neolactoside IV(4)-beta-GalNAc-IV(3)-alpha-NeuGc-nLc4Cer + UDP + H(+). Its pathway is sphingolipid metabolism. Its function is as follows. Involved in the biosynthesis of gangliosides GM2, GD2, GT2 and GA2 from GM3, GD3, GT3 and GA3, respectively. The sequence is that of Beta-1,4 N-acetylgalactosaminyltransferase 1 from Homo sapiens (Human).